A 265-amino-acid polypeptide reads, in one-letter code: Ubiquinone biosynthesis protein COQ4 homolog, mitochondrial (265 aa).

His-162, Asp-163, His-166, and Glu-178 together coordinate Zn(2+).

The protein belongs to the COQ4 family. In terms of assembly, component of a multi-subunit COQ enzyme complex. Requires Zn(2+) as cofactor.

The protein localises to the mitochondrion inner membrane. The catalysed reaction is a 4-hydroxy-3-methoxy-5-(all-trans-polyprenyl)benzoate + H(+) = a 2-methoxy-6-(all-trans-polyprenyl)phenol + CO2. Its pathway is cofactor biosynthesis; ubiquinone biosynthesis. Functionally, lyase that catalyzes the C1-decarboxylation of 4-hydroxy-3-methoxy-5-(all-trans-polyprenyl)benzoic acid into 2-methoxy-6-(all-trans-polyprenyl)phenol during ubiquinone biosynthesis. In Drosophila willistoni (Fruit fly), this protein is Ubiquinone biosynthesis protein COQ4 homolog, mitochondrial.